A 243-amino-acid chain; its full sequence is Proteasome subunit alpha (243 aa).

The protein belongs to the peptidase T1A family. As to quaternary structure, the 20S proteasome core is composed of 14 alpha and 14 beta subunits that assemble into four stacked heptameric rings, resulting in a barrel-shaped structure. The two inner rings, each composed of seven catalytic beta subunits, are sandwiched by two outer rings, each composed of seven alpha subunits. The catalytic chamber with the active sites is on the inside of the barrel. Has a gated structure, the ends of the cylinder being occluded by the N-termini of the alpha-subunits. Is capped at one or both ends by the proteasome regulatory ATPase, PAN.

It is found in the cytoplasm. Its activity is regulated as follows. The formation of the proteasomal ATPase PAN-20S proteasome complex, via the docking of the C-termini of PAN into the intersubunit pockets in the alpha-rings, triggers opening of the gate for substrate entry. Interconversion between the open-gate and close-gate conformations leads to a dynamic regulation of the 20S proteasome proteolysis activity. In terms of biological role, component of the proteasome core, a large protease complex with broad specificity involved in protein degradation. This chain is Proteasome subunit alpha, found in Pyrobaculum aerophilum (strain ATCC 51768 / DSM 7523 / JCM 9630 / CIP 104966 / NBRC 100827 / IM2).